Here is a 369-residue protein sequence, read N- to C-terminus: Glycolate oxidase 1 (369 aa).

One can recognise an FMN hydroxy acid dehydrogenase domain in the interval 1–360 (MGEITNVMEY…TRAHIYTDAD (360 aa)). Glyoxylate is bound at residue Y25. FMN is bound by residues 78 to 80 (PSA), S107, 128 to 130 (QLY), and T156. Y130 is a binding site for glyoxylate. Residue R165 participates in glyoxylate binding. K231 and S253 together coordinate FMN. Positions 255 and 258 each coordinate glyoxylate. The active-site Proton acceptor is the H255. FMN-binding positions include 286-290 (DGGVR) and 309-310 (GR). Positions 367–369 (PRL) match the Microbody targeting signal motif.

This sequence belongs to the FMN-dependent alpha-hydroxy acid dehydrogenase family. Homotetramer. Interacts with rice dwarf virus (RDV) P8. This interaction promotes viral P8 relocation to virus factories peripheral to peroxisomes. FMN serves as cofactor.

It is found in the peroxisome. It catalyses the reaction glycolate + O2 = glyoxylate + H2O2. It functions in the pathway photosynthesis; photorespiration; glycine from 2-phosphoglycolate: step 2/3. In terms of biological role, catalyzes the oxidation of glycolate to glyoxylate, with a reduction of O2 to H2O2. Is a key enzyme in photorespiration in plants. Can exert a strong regulation over photosynthesis, possibly through a feed-back inhibition on Rubisco activase. Does not seem to play a role in oxalate accumulation. In Oryza sativa subsp. indica (Rice), this protein is Glycolate oxidase 1 (GLO1).